An 85-amino-acid chain; its full sequence is uncharacterized protein (85 aa).

This is an uncharacterized protein from Caenorhabditis elegans.